The sequence spans 405 residues: Tryptophan synthase beta chain (405 aa).

K98 is modified (N6-(pyridoxal phosphate)lysine).

Belongs to the TrpB family. Tetramer of two alpha and two beta chains. Requires pyridoxal 5'-phosphate as cofactor.

The enzyme catalyses (1S,2R)-1-C-(indol-3-yl)glycerol 3-phosphate + L-serine = D-glyceraldehyde 3-phosphate + L-tryptophan + H2O. Its pathway is amino-acid biosynthesis; L-tryptophan biosynthesis; L-tryptophan from chorismate: step 5/5. Functionally, the beta subunit is responsible for the synthesis of L-tryptophan from indole and L-serine. The sequence is that of Tryptophan synthase beta chain (trpB) from Xylella fastidiosa (strain 9a5c).